A 1073-amino-acid polypeptide reads, in one-letter code: Carbamoyl phosphate synthase large chain (1073 aa).

The segment at 2–403 is carboxyphosphate synthetic domain; sequence PKRTDIKSIL…SLQKALRGLE (402 aa). ATP is bound by residues arginine 129, arginine 169, glycine 175, glycine 176, glutamate 208, leucine 210, glutamate 215, glycine 241, isoleucine 242, histidine 243, glutamine 285, and glutamate 299. The ATP-grasp 1 domain occupies 133–328; sequence DVAMKKIGLE…IAKVAAKLAV (196 aa). The Mg(2+) site is built by glutamine 285, glutamate 299, and asparagine 301. Residues glutamine 285, glutamate 299, and asparagine 301 each coordinate Mn(2+). Residues 404–553 are oligomerization domain; it reads VGATGFDPKV…YSTYEEECEA (150 aa). A carbamoyl phosphate synthetic domain region spans residues 554–936; the sequence is NPSTDREKIM…AFAKAQLGSN (383 aa). The region spanning 679 to 870 is the ATP-grasp 2 domain; sequence QHAVDRLKLK…LAKVAARVMA (192 aa). Positions 715, 754, 756, 761, 786, 787, 788, 789, 829, and 841 each coordinate ATP. Positions 829, 841, and 843 each coordinate Mg(2+). Residues glutamine 829, glutamate 841, and asparagine 843 each contribute to the Mn(2+) site. The 137-residue stretch at 937-1073 folds into the MGS-like domain; that stretch reads STMKKHGRAL…SVQEMHAQIK (137 aa). Residues 937-1073 are allosteric domain; it reads STMKKHGRAL…SVQEMHAQIK (137 aa).

Belongs to the CarB family. As to quaternary structure, composed of two chains; the small (or glutamine) chain promotes the hydrolysis of glutamine to ammonia, which is used by the large (or ammonia) chain to synthesize carbamoyl phosphate. Tetramer of heterodimers (alpha,beta)4. Requires Mg(2+) as cofactor. Mn(2+) serves as cofactor.

The catalysed reaction is hydrogencarbonate + L-glutamine + 2 ATP + H2O = carbamoyl phosphate + L-glutamate + 2 ADP + phosphate + 2 H(+). The enzyme catalyses hydrogencarbonate + NH4(+) + 2 ATP = carbamoyl phosphate + 2 ADP + phosphate + 2 H(+). The protein operates within amino-acid biosynthesis; L-arginine biosynthesis; carbamoyl phosphate from bicarbonate: step 1/1. Its pathway is pyrimidine metabolism; UMP biosynthesis via de novo pathway; (S)-dihydroorotate from bicarbonate: step 1/3. Its function is as follows. Large subunit of the glutamine-dependent carbamoyl phosphate synthetase (CPSase). CPSase catalyzes the formation of carbamoyl phosphate from the ammonia moiety of glutamine, carbonate, and phosphate donated by ATP, constituting the first step of 2 biosynthetic pathways, one leading to arginine and/or urea and the other to pyrimidine nucleotides. The large subunit (synthetase) binds the substrates ammonia (free or transferred from glutamine from the small subunit), hydrogencarbonate and ATP and carries out an ATP-coupled ligase reaction, activating hydrogencarbonate by forming carboxy phosphate which reacts with ammonia to form carbamoyl phosphate. This is Carbamoyl phosphate synthase large chain from Escherichia coli O157:H7.